The sequence spans 442 residues: Protein translocase subunit SecY (442 aa).

Helical transmembrane passes span 24–44 (FLFLAIIVYRIGAHIPVPGIN), 76–96 (IFALGIMPYISASIIMQLMTA), 125–145 (VLALVQAIGMSVGLGSQGVAF), 149–169 (FGFYFVAVTTFVAGAMFMMWL), 178–198 (VGNGISMLIFAGIVAGLPRAI), 212–232 (IFALIGVGLLAVAIIAFVVFI), 269–289 (VIPAIFASSILLFPASLGSWF), 312–332 (NILLFTAGIVFFCFFYTALMF), 363–383 (GVLTRLTMFGALYMTAVCLLP), and 385–405 (FLVVAAHVPFYLGGTSLLIVV).

Belongs to the SecY/SEC61-alpha family. Component of the Sec protein translocase complex. Heterotrimer consisting of SecY, SecE and SecG subunits. The heterotrimers can form oligomers, although 1 heterotrimer is thought to be able to translocate proteins. Interacts with the ribosome. Interacts with SecDF, and other proteins may be involved. Interacts with SecA.

The protein resides in the cell inner membrane. In terms of biological role, the central subunit of the protein translocation channel SecYEG. Consists of two halves formed by TMs 1-5 and 6-10. These two domains form a lateral gate at the front which open onto the bilayer between TMs 2 and 7, and are clamped together by SecE at the back. The channel is closed by both a pore ring composed of hydrophobic SecY resides and a short helix (helix 2A) on the extracellular side of the membrane which forms a plug. The plug probably moves laterally to allow the channel to open. The ring and the pore may move independently. The polypeptide is Protein translocase subunit SecY (Pseudomonas aeruginosa (strain ATCC 15692 / DSM 22644 / CIP 104116 / JCM 14847 / LMG 12228 / 1C / PRS 101 / PAO1)).